The following is a 78-amino-acid chain: UPF0154 protein SSU98_1719 (78 aa).

The chain crosses the membrane as a helical span at residues 3–23 (LGLAILLIVLAFAGGVALGIY).

Belongs to the UPF0154 family.

It is found in the cell membrane. The polypeptide is UPF0154 protein SSU98_1719 (Streptococcus suis (strain 98HAH33)).